We begin with the raw amino-acid sequence, 194 residues long: Threonylcarbamoyl-AMP synthase (194 aa).

Residues 12–194 (SPNMKDLLIQ…DVMTGKLIRE (183 aa)) enclose the YrdC-like domain.

This sequence belongs to the SUA5 family. TsaC subfamily.

It localises to the cytoplasm. It catalyses the reaction L-threonine + hydrogencarbonate + ATP = L-threonylcarbamoyladenylate + diphosphate + H2O. Required for the formation of a threonylcarbamoyl group on adenosine at position 37 (t(6)A37) in tRNAs that read codons beginning with adenine. Catalyzes the conversion of L-threonine, HCO(3)(-)/CO(2) and ATP to give threonylcarbamoyl-AMP (TC-AMP) as the acyladenylate intermediate, with the release of diphosphate. The protein is Threonylcarbamoyl-AMP synthase of Blochmanniella pennsylvanica (strain BPEN).